We begin with the raw amino-acid sequence, 645 residues long: MAALMNGFGSLQCKATVHVEKGHMQASGMAFFSPVNRCAQVHISSIPHFIGAKSVSASQLRMRHKVGSIRASAASCLQDETTKYFDFVVIGSGVAGLRYALEVSKYGSVAIITKAEPHESNTNYAQGGVSAVLCPSDSVESHMQDTIVAGAYLCDEETVRVVCTEGPERVKELIAMGASFDHGEDGRLHLAREGGHSHNRIVHSADMTGREIERALLQAVDNDDNISLFGHHFAIDLLTCQSNGEIYCYGVDSLDAETQKAIRFISKVTLLASGGVGHIYPSTTNPPVATGDGIAMSHRAQAVISNMEFVQFHPTALSDEGLPIKPATRRENAFLITEAVRGDGGILYNQSMERFMTSYDDRAELAPRDVVARSIDDQLKKRGEKYVLLDISHKPREKVLAHFPNIAAECLRHGLDITQQPIPVVPAAHYMCGGVRAGLQGETNVKGLYVAGEVACTGLHGANRLASNSLLEALVFARRAVQPSIDHMVDADVDPSFAKKWARPVLSVSLRDSILSDIIEKTKQARMELQSIMWEYVGIVRSTNRLKHAEWKISDLESEWEEFLFRRGWKPTMVGVETCEMRNLFCCAKLVVKSALARHESRGLHFTEDFPYLEESKRKPTVIFPTHIQELTWSSKPLQKQLQCK.

The transit peptide at methionine 1–arginine 70 directs the protein to the chloroplast. FAD contacts are provided by residues serine 92–alanine 95, lysine 114, asparagine 121–glycine 128, and aspartate 292. Arginine 368 serves as the catalytic Proton donor/acceptor. FAD is bound by residues glutamate 453 and serine 469–leucine 470.

This sequence belongs to the FAD-dependent oxidoreductase 2 family. NadB subfamily. FAD is required as a cofactor.

It localises to the plastid. The protein localises to the chloroplast. The catalysed reaction is L-aspartate + O2 = iminosuccinate + H2O2. It participates in cofactor biosynthesis; NAD(+) biosynthesis; iminoaspartate from L-aspartate (oxidase route): step 1/1. Catalyzes the oxidation of L-aspartate to iminoaspartate. In Oryza sativa subsp. japonica (Rice), this protein is L-aspartate oxidase, chloroplastic.